The primary structure comprises 412 residues: Serine hydroxymethyltransferase (412 aa).

(6S)-5,6,7,8-tetrahydrofolate contacts are provided by residues Leu-117 and 121–123 (GHL). At Lys-226 the chain carries N6-(pyridoxal phosphate)lysine. 349–351 (SPF) is a binding site for (6S)-5,6,7,8-tetrahydrofolate.

This sequence belongs to the SHMT family. As to quaternary structure, homodimer. Pyridoxal 5'-phosphate is required as a cofactor.

Its subcellular location is the cytoplasm. It catalyses the reaction (6R)-5,10-methylene-5,6,7,8-tetrahydrofolate + glycine + H2O = (6S)-5,6,7,8-tetrahydrofolate + L-serine. It functions in the pathway one-carbon metabolism; tetrahydrofolate interconversion. It participates in amino-acid biosynthesis; glycine biosynthesis; glycine from L-serine: step 1/1. In terms of biological role, catalyzes the reversible interconversion of serine and glycine with tetrahydrofolate (THF) serving as the one-carbon carrier. This reaction serves as the major source of one-carbon groups required for the biosynthesis of purines, thymidylate, methionine, and other important biomolecules. Also exhibits THF-independent aldolase activity toward beta-hydroxyamino acids, producing glycine and aldehydes, via a retro-aldol mechanism. The protein is Serine hydroxymethyltransferase of Geobacillus kaustophilus (strain HTA426).